A 604-amino-acid polypeptide reads, in one-letter code: MSEHDMQNTNPPLPPLPPEITQLLSGLDAAQWAWLSGYAWAKAGNGASAGLPALQTALPAAEPFSVTVLSASQTGNAKSVADKAADSLEAAGIQVSRAELKDYKAKNIAGERRLLLVTSTQGEGEPPKEAVVLHKLLNGKKAPKLDKLQFAVLGLGDSSYPNFCQAGKDFDRRFEELGAKRLLERVDADLDFTASANAWTDNIAALLKEEAAKNRATPAPQTTPPAGLQTAPDGRYCKAAPFPAALLANQKITARQSDKDVRHIEIDLSGSDLHYLPGDALGVWFDNDPALVREILDLLGIDPATEIQAGGKMMPVARALSSHFELTQNTPAFVKGYAAFAHYEELDKIIADNAVLQDFVQNTPIVDVLHRFPASLTAEQFIRLLRPLAPRLYSISSAQAEVGDEVHLTVGVVRFEHEGRARTGGASGFLADRLEEDGTVRVFVERNDGFRLPEDSRKPIVMIGSGTGVAPFRAFVQQRAAENAEGKNWLIFGNPHFARDFLYQTEWQQFAKDGFLHRYDFAWSRDQEEKIYVQDKIREQAEGLWQWLQEGAHIYVCGDAAKMAKDVEAALLDVIIGAGHLDEEGAEEYLDMLREEKRYQRDVY.

The Flavodoxin-like domain occupies 66–204 (VTVLSASQTG…SANAWTDNIA (139 aa)). FMN-binding positions include 72–77 (SQTGNA), 119–122 (STQG), and 155–164 (LGDSSYPNFC). In terms of domain architecture, FAD-binding FR-type spans 239 to 453 (AAPFPAALLA…VERNDGFRLP (215 aa)). FAD is bound by residues threonine 327, glutamine 361, 391–394 (RLYS), 409–411 (TVG), and 424–427 (GGAS). NADP(+) is bound by residues 524–525 (SR), 530–534 (KIYVQ), and aspartate 566. An FAD-binding site is contributed by tyrosine 604.

This sequence belongs to the NADPH-dependent sulphite reductase flavoprotein subunit CysJ family. In the N-terminal section; belongs to the flavodoxin family. It in the C-terminal section; belongs to the flavoprotein pyridine nucleotide cytochrome reductase family. Alpha(8)-beta(8). The alpha component is a flavoprotein, the beta component is a hemoprotein. Requires FAD as cofactor. FMN is required as a cofactor.

The catalysed reaction is hydrogen sulfide + 3 NADP(+) + 3 H2O = sulfite + 3 NADPH + 4 H(+). The protein operates within sulfur metabolism; hydrogen sulfide biosynthesis; hydrogen sulfide from sulfite (NADPH route): step 1/1. Its function is as follows. Component of the sulfite reductase complex that catalyzes the 6-electron reduction of sulfite to sulfide. This is one of several activities required for the biosynthesis of L-cysteine from sulfate. The flavoprotein component catalyzes the electron flow from NADPH -&gt; FAD -&gt; FMN to the hemoprotein component. The protein is Sulfite reductase [NADPH] flavoprotein alpha-component of Neisseria meningitidis serogroup B (strain ATCC BAA-335 / MC58).